We begin with the raw amino-acid sequence, 274 residues long: 2,3,4,5-tetrahydropyridine-2,6-dicarboxylate N-succinyltransferase (274 aa).

2 residues coordinate substrate: Arg-104 and Asp-141.

This sequence belongs to the transferase hexapeptide repeat family. As to quaternary structure, homotrimer.

The protein localises to the cytoplasm. The enzyme catalyses (S)-2,3,4,5-tetrahydrodipicolinate + succinyl-CoA + H2O = (S)-2-succinylamino-6-oxoheptanedioate + CoA. Its pathway is amino-acid biosynthesis; L-lysine biosynthesis via DAP pathway; LL-2,6-diaminopimelate from (S)-tetrahydrodipicolinate (succinylase route): step 1/3. In Shigella boydii serotype 4 (strain Sb227), this protein is 2,3,4,5-tetrahydropyridine-2,6-dicarboxylate N-succinyltransferase.